Here is a 255-residue protein sequence, read N- to C-terminus: (R)-S-adenosyl-L-methionine hydrolase (255 aa).

Adenosine-binding residues include Asp-9, Asp-70, and Asn-186. (R)-S-adenosyl-L-methionine contacts are provided by Asn-186, Ser-227, Glu-232, and Val-235. Residue Val-235 participates in adenosine binding.

This sequence belongs to the SAM hydrolase / SAM-dependent halogenase family. As to quaternary structure, homotrimer.

The catalysed reaction is (R)-S-adenosyl-L-methionine + H2O = adenosine + L-methionine + H(+). Catalyzes the hydrolysis of S-adenosyl-L-methionine (SAM) into adenosine and L-methionine. Does not have chlorinase or fluorinase activity. In Thermus thermophilus (strain ATCC 27634 / DSM 579 / HB8), this protein is (R)-S-adenosyl-L-methionine hydrolase.